Consider the following 993-residue polypeptide: Testis-expressed protein 13C (993 aa).

Disordered regions lie at residues 281 to 381, 520 to 547, and 894 to 959; these read QEET…SLKK, DSKS…SHSL, and FSKS…PVNW. Polar residues predominate over residues 325-335; sequence GMTSQGDSSSH. The segment covering 353-364 has biased composition (basic and acidic residues); the sequence is SRSHSLEKKPVM. The span at 944–957 shows a compositional bias: polar residues; that stretch reads ESQQQKPASCSSPV. Residues 955 to 984 form a RanBP2-type zinc finger; it reads SPVNWACPWCNAMNFPRNKVCSKCKRVRMP.

It belongs to the TEX13 family.

The protein is Testis-expressed protein 13C of Homo sapiens (Human).